Consider the following 410-residue polypeptide: LL-diaminopimelate aminotransferase (410 aa).

Substrate is bound by residues Tyr-15 and Gly-42. Residues Tyr-72, 108–109 (SK), Tyr-132, Asn-187, Tyr-218, and 246–248 (SFS) each bind pyridoxal 5'-phosphate. Substrate contacts are provided by Lys-109, Tyr-132, and Asn-187. Residue Lys-249 is modified to N6-(pyridoxal phosphate)lysine. 2 residues coordinate pyridoxal 5'-phosphate: Arg-257 and Asn-292. Substrate is bound by residues Asn-292 and Arg-388.

The protein belongs to the class-I pyridoxal-phosphate-dependent aminotransferase family. LL-diaminopimelate aminotransferase subfamily. In terms of assembly, homodimer. Pyridoxal 5'-phosphate is required as a cofactor.

The catalysed reaction is (2S,6S)-2,6-diaminopimelate + 2-oxoglutarate = (S)-2,3,4,5-tetrahydrodipicolinate + L-glutamate + H2O + H(+). Its pathway is amino-acid biosynthesis; L-lysine biosynthesis via DAP pathway; LL-2,6-diaminopimelate from (S)-tetrahydrodipicolinate (aminotransferase route): step 1/1. In terms of biological role, involved in the synthesis of meso-diaminopimelate (m-DAP or DL-DAP), required for both lysine and peptidoglycan biosynthesis. Catalyzes the direct conversion of tetrahydrodipicolinate to LL-diaminopimelate. This is LL-diaminopimelate aminotransferase from Geotalea uraniireducens (strain Rf4) (Geobacter uraniireducens).